Reading from the N-terminus, the 349-residue chain is Inhibitor of nuclear factor kappa-B kinase-interacting protein (349 aa).

Residues 1 to 11 (MSEVKSRKKSG) are compositionally biased toward basic residues. Positions 1–39 (MSEVKSRKKSGTKGAPAEPGKRNEGGKSPEARGGGGRGW) are disordered. Residues 19–30 (PGKRNEGGKSPE) are compositionally biased toward basic and acidic residues. The helical transmembrane segment at 45 to 61 (GVSLLSLGTCLGLAWFV) threads the bilayer. Residue N145 is glycosylated (N-linked (GlcNAc...) asparagine). Coiled-coil stretches lie at residues 183–216 (GLVT…IGDL) and 304–347 (IGRL…HISD). N-linked (GlcNAc...) asparagine glycosylation is present at N327.

Post-translationally, N-glycosylated.

The protein localises to the endoplasmic reticulum membrane. In terms of biological role, target of p53/TP53 with pro-apoptotic function. The chain is Inhibitor of nuclear factor kappa-B kinase-interacting protein (IKBIP) from Bos taurus (Bovine).